The sequence spans 226 residues: Thiamine-phosphate synthase (226 aa).

Residues 46-50 and D83 each bind 4-amino-2-methyl-5-(diphosphooxymethyl)pyrimidine; that span reads QFRDK. Residues D84 and D103 each contribute to the Mg(2+) site. S122 is a 4-amino-2-methyl-5-(diphosphooxymethyl)pyrimidine binding site. 149–151 provides a ligand contact to 2-[(2R,5Z)-2-carboxy-4-methylthiazol-5(2H)-ylidene]ethyl phosphate; it reads TQS. 4-amino-2-methyl-5-(diphosphooxymethyl)pyrimidine is bound at residue K152. 2-[(2R,5Z)-2-carboxy-4-methylthiazol-5(2H)-ylidene]ethyl phosphate contacts are provided by residues G181 and 201-202; that span reads IT.

This sequence belongs to the thiamine-phosphate synthase family. The cofactor is Mg(2+).

It carries out the reaction 2-[(2R,5Z)-2-carboxy-4-methylthiazol-5(2H)-ylidene]ethyl phosphate + 4-amino-2-methyl-5-(diphosphooxymethyl)pyrimidine + 2 H(+) = thiamine phosphate + CO2 + diphosphate. The catalysed reaction is 2-(2-carboxy-4-methylthiazol-5-yl)ethyl phosphate + 4-amino-2-methyl-5-(diphosphooxymethyl)pyrimidine + 2 H(+) = thiamine phosphate + CO2 + diphosphate. The enzyme catalyses 4-methyl-5-(2-phosphooxyethyl)-thiazole + 4-amino-2-methyl-5-(diphosphooxymethyl)pyrimidine + H(+) = thiamine phosphate + diphosphate. Its pathway is cofactor biosynthesis; thiamine diphosphate biosynthesis; thiamine phosphate from 4-amino-2-methyl-5-diphosphomethylpyrimidine and 4-methyl-5-(2-phosphoethyl)-thiazole: step 1/1. Functionally, condenses 4-methyl-5-(beta-hydroxyethyl)thiazole monophosphate (THZ-P) and 2-methyl-4-amino-5-hydroxymethyl pyrimidine pyrophosphate (HMP-PP) to form thiamine monophosphate (TMP). The polypeptide is Thiamine-phosphate synthase (Haemophilus influenzae (strain 86-028NP)).